The following is a 341-amino-acid chain: MKALSKLKAEEGIWMTDVPEPELGHNDLLIKIRKTAICGTDVHIYNWDEWSQKTIPVPMVVGHEYVGEVVGIGQEVKGFKIGDRVSGEGHITCGHCRNCRAGRTHLCRNTIGVGVNRPGCFAEYLVIPAFNAFKIPDNISDDLASIFDPFGNAVHTALSFDLVGEDVLVSGAGPIGIMAAAVAKHVGARNVVITDVNEYRLELARKMGITRAVNVAKENLEDVMAELGMTEGFDVGLEMSGAPAAFRTMLDTMNHGGRIAMLGIPPSDMSIDWTKVIFKGLFIKGIYGREMFETWYKMAALIQSGLDLSPIITHRFSIDDFQKGFDAMRSGQSGKVILSWD.

C38 contacts Zn(2+). Active-site charge relay system residues include T40 and H43. Zn(2+) contacts are provided by H63, E64, C93, C96, C99, and C107. Residues I175, D195, R200, 262–264 (LGI), and 286–287 (IY) each bind NAD(+).

Belongs to the zinc-containing alcohol dehydrogenase family. As to quaternary structure, homotetramer. It depends on Zn(2+) as a cofactor.

Its subcellular location is the cytoplasm. It carries out the reaction L-threonine + NAD(+) = (2S)-2-amino-3-oxobutanoate + NADH + H(+). The protein operates within amino-acid degradation; L-threonine degradation via oxydo-reductase pathway; glycine from L-threonine: step 1/2. In terms of biological role, catalyzes the NAD(+)-dependent oxidation of L-threonine to 2-amino-3-ketobutyrate. This chain is L-threonine 3-dehydrogenase, found in Escherichia fergusonii (strain ATCC 35469 / DSM 13698 / CCUG 18766 / IAM 14443 / JCM 21226 / LMG 7866 / NBRC 102419 / NCTC 12128 / CDC 0568-73).